The chain runs to 317 residues: Malate dehydrogenase (317 aa).

Residues 10–15 (GGGQIG) and D34 each bind NAD(+). Residues R83 and R89 each contribute to the substrate site. NAD(+)-binding positions include N96 and 119-121 (ISN). Positions 121 and 152 each coordinate substrate. H176 serves as the catalytic Proton acceptor.

Belongs to the LDH/MDH superfamily. MDH type 3 family.

The enzyme catalyses (S)-malate + NAD(+) = oxaloacetate + NADH + H(+). Its function is as follows. Catalyzes the reversible oxidation of malate to oxaloacetate. This is Malate dehydrogenase from Geobacter metallireducens (strain ATCC 53774 / DSM 7210 / GS-15).